Consider the following 496-residue polypeptide: Membrane-bound lytic murein transglycosylase F (496 aa).

Positions 1–29 are cleaved as a signal peptide; it reads MFFRPDFRPRCAKWLIATGLFLMLGACVE. Positions 30–267 are non-LT domain; sequence KPTTLERVKE…RLKDRYYGHV (238 aa). The interval 268–496 is LT domain; the sequence is DVLGYVGAYT…SGSSPDKPAL (229 aa). Glu314 is a catalytic residue. The interval 464–496 is disordered; that stretch reads VADGNLHVPGVDKTQPPAPPAPASGSSPDKPAL. The span at 486–496 shows a compositional bias: low complexity; it reads ASGSSPDKPAL.

It in the N-terminal section; belongs to the bacterial solute-binding protein 3 family. In the C-terminal section; belongs to the transglycosylase Slt family.

The protein localises to the cell outer membrane. It catalyses the reaction Exolytic cleavage of the (1-&gt;4)-beta-glycosidic linkage between N-acetylmuramic acid (MurNAc) and N-acetylglucosamine (GlcNAc) residues in peptidoglycan, from either the reducing or the non-reducing ends of the peptidoglycan chains, with concomitant formation of a 1,6-anhydrobond in the MurNAc residue.. Its function is as follows. Murein-degrading enzyme that degrades murein glycan strands and insoluble, high-molecular weight murein sacculi, with the concomitant formation of a 1,6-anhydromuramoyl product. Lytic transglycosylases (LTs) play an integral role in the metabolism of the peptidoglycan (PG) sacculus. Their lytic action creates space within the PG sacculus to allow for its expansion as well as for the insertion of various structures such as secretion systems and flagella. This chain is Membrane-bound lytic murein transglycosylase F, found in Pseudomonas savastanoi pv. phaseolicola (strain 1448A / Race 6) (Pseudomonas syringae pv. phaseolicola (strain 1448A / Race 6)).